The chain runs to 520 residues: MTHTAHPDSVLIVDFGSQVTQLIARRVREAGVYCEIVPFQSAEEGFKRLQPKAVILSGSPASTVDEGSPRAPQIIFDSGLPVFGICYGQQTMCMQLGGKVESGHHREFGRAFLDVDKDCQLFEGLWSSGSRHQVWMSHGDRVTALPDGFEVVATSSNAPFAFIADEKRKYYGVQFHPEVVHTPDGAKLIGNFIHNIAGIKGDWSMSAYRQKAVDEIRKQVGDKRVICALSGGVDSSVAALLIHEAVGDQLTCILVDHGLMRKDEAANVVAMFREHYNLHLLHVDASDRFIGELEGVSDPETKRKIIGRLFIETFEEEAKKLGGADFLGQGTLYPDVIESVSFTGGPSVTIKSHHNVGGLPERMKMQLVEPLRELFKDEVRALGRELGLPDSFIGRHPFPGPGLAIRCPGGISREKLEILREADAIYLDEIRKAGLYDAIWQAFAVLLPVQTVGVMGDGRTYEFVCALRAVTSVDGMTADFYHYDMEFLGRAATRIINEVRGINRVVYDVTSKPPGTIEWE.

Positions 9 to 202 (SVLIVDFGSQ…IHNIAGIKGD (194 aa)) constitute a Glutamine amidotransferase type-1 domain. Cysteine 86 serves as the catalytic Nucleophile. Catalysis depends on residues histidine 176 and glutamate 178. The region spanning 203 to 395 (WSMSAYRQKA…LGLPDSFIGR (193 aa)) is the GMPS ATP-PPase domain. 230–236 (SGGVDSS) contacts ATP.

As to quaternary structure, homodimer.

It catalyses the reaction XMP + L-glutamine + ATP + H2O = GMP + L-glutamate + AMP + diphosphate + 2 H(+). The protein operates within purine metabolism; GMP biosynthesis; GMP from XMP (L-Gln route): step 1/1. Catalyzes the synthesis of GMP from XMP. This chain is GMP synthase [glutamine-hydrolyzing], found in Rhizobium etli (strain CIAT 652).